The following is a 211-amino-acid chain: Large ribosomal subunit protein eL13 (211 aa).

K16 carries the post-translational modification N6-acetyllysine. Phosphoserine is present on residues S52, S77, and S106. Residues K123 and K145 each participate in a glycyl lysine isopeptide (Lys-Gly) (interchain with G-Cter in SUMO2) cross-link. Residue K174 forms a Glycyl lysine isopeptide (Lys-Gly) (interchain with G-Cter in SUMO1); alternate linkage. Residues K174 and K177 each participate in a glycyl lysine isopeptide (Lys-Gly) (interchain with G-Cter in SUMO2); alternate cross-link. The residue at position 177 (K177) is an N6-acetyllysine; alternate.

Belongs to the eukaryotic ribosomal protein eL13 family. As to quaternary structure, component of the 60S large ribosomal subunit (LSU). Higher levels of expression in benign breast lesions than in carcinomas.

The protein resides in the cytoplasm. Functionally, component of the ribosome, a large ribonucleoprotein complex responsible for the synthesis of proteins in the cell. The small ribosomal subunit (SSU) binds messenger RNAs (mRNAs) and translates the encoded message by selecting cognate aminoacyl-transfer RNA (tRNA) molecules. The large subunit (LSU) contains the ribosomal catalytic site termed the peptidyl transferase center (PTC), which catalyzes the formation of peptide bonds, thereby polymerizing the amino acids delivered by tRNAs into a polypeptide chain. The nascent polypeptides leave the ribosome through a tunnel in the LSU and interact with protein factors that function in enzymatic processing, targeting, and the membrane insertion of nascent chains at the exit of the ribosomal tunnel. As part of the LSU, it is probably required for its formation and the maturation of rRNAs. Plays a role in bone development. This Homo sapiens (Human) protein is Large ribosomal subunit protein eL13 (RPL13).